Here is a 206-residue protein sequence, read N- to C-terminus: Transcription antitermination protein NusB (206 aa).

The tract at residues 135–206 (ARGEKTSAQE…ETQPPGVNEV (72 aa)) is disordered. Residues 169–180 (ATPATTPVTTTV) are compositionally biased toward low complexity.

The protein belongs to the NusB family.

Its function is as follows. Involved in transcription antitermination. Required for transcription of ribosomal RNA (rRNA) genes. Binds specifically to the boxA antiterminator sequence of the ribosomal RNA (rrn) operons. This is Transcription antitermination protein NusB from Heliobacterium modesticaldum (strain ATCC 51547 / Ice1).